Here is a 185-residue protein sequence, read N- to C-terminus: Ribosome-recycling factor (185 aa).

Belongs to the RRF family.

It localises to the cytoplasm. In terms of biological role, responsible for the release of ribosomes from messenger RNA at the termination of protein biosynthesis. May increase the efficiency of translation by recycling ribosomes from one round of translation to another. The sequence is that of Ribosome-recycling factor from Pseudomonas syringae pv. tomato (strain ATCC BAA-871 / DC3000).